A 172-amino-acid chain; its full sequence is Endoribonuclease YbeY (172 aa).

Zn(2+)-binding residues include His137, His141, and His147.

This sequence belongs to the endoribonuclease YbeY family. It depends on Zn(2+) as a cofactor.

It is found in the cytoplasm. Functionally, single strand-specific metallo-endoribonuclease involved in late-stage 70S ribosome quality control and in maturation of the 3' terminus of the 16S rRNA. The protein is Endoribonuclease YbeY of Dehalococcoides mccartyi (strain ATCC BAA-2266 / KCTC 15142 / 195) (Dehalococcoides ethenogenes (strain 195)).